Consider the following 78-residue polypeptide: Large ribosomal subunit protein bL28 (78 aa).

The disordered stretch occupies residues 1–23 (MSRVCQVTGKKPMVGNNRSHAKN).

It belongs to the bacterial ribosomal protein bL28 family.

The chain is Large ribosomal subunit protein bL28 from Shewanella sediminis (strain HAW-EB3).